Consider the following 364-residue polypeptide: Flagellar P-ring protein (364 aa).

An N-terminal signal peptide occupies residues 1 to 29; the sequence is MKTIGGKVFRHAAILAACVLPLWCQPALA.

Belongs to the FlgI family. In terms of assembly, the basal body constitutes a major portion of the flagellar organelle and consists of four rings (L,P,S, and M) mounted on a central rod.

It is found in the periplasm. The protein resides in the bacterial flagellum basal body. Assembles around the rod to form the L-ring and probably protects the motor/basal body from shearing forces during rotation. The polypeptide is Flagellar P-ring protein (Dechloromonas aromatica (strain RCB)).